A 190-amino-acid chain; its full sequence is Putative resolvase R771 (190 aa).

Positions S11–I30 form a DNA-binding region, H-T-H motif. Residues L61 to K190 enclose the Resolvase/invertase-type recombinase catalytic domain. Positions V66–T92 form a coiled coil. Residue S69 is the O-(5'-phospho-DNA)-serine intermediate of the active site.

It belongs to the site-specific recombinase resolvase family.

Resolvase catalyzes the resolution (a site-specific recombination) of the cointegrated replicon to yield the final transposition products. This chain is Putative resolvase R771, found in Acanthamoeba polyphaga (Amoeba).